A 204-amino-acid polypeptide reads, in one-letter code: UPF0228 protein MA_0511 (204 aa).

The protein belongs to the UPF0228 family.

In Methanosarcina acetivorans (strain ATCC 35395 / DSM 2834 / JCM 12185 / C2A), this protein is UPF0228 protein MA_0511.